Consider the following 209-residue polypeptide: High frequency lysogenization protein HflD homolog (209 aa).

The stretch at 95 to 132 forms a coiled coil; the sequence is LERKLAASKGAMNTLGNRIADLSRQLEHFELESDTLMS.

This sequence belongs to the HflD family.

The protein localises to the cytoplasm. It localises to the cell inner membrane. The polypeptide is High frequency lysogenization protein HflD homolog (Cronobacter sakazakii (strain ATCC BAA-894) (Enterobacter sakazakii)).